We begin with the raw amino-acid sequence, 328 residues long: tRNA methyltransferase 10 homolog A (328 aa).

Disordered regions lie at residues 1–91 and 281–328; these read MSSE…RKRV and HKAC…PVLQ. Serine 22 bears the Phosphoserine mark. The stretch at 43–83 forms a coiled coil; sequence RQLKKLMKQKQWEEQREQRKEKRKEKRKRKKLERRQLESNS. Basic and acidic residues predominate over residues 52-62; it reads KQWEEQREQRK. The span at 63–75 shows a compositional bias: basic residues; that stretch reads EKRKEKRKRKKLE. Residues 88-278 enclose the SAM-dependent MTase TRM10-type domain; the sequence is RKRVRRDVAR…TILPQRKGAV (191 aa). The span at 305–319 shows a compositional bias: basic and acidic residues; the sequence is ESCRDNPDSPQKDEQ.

The protein belongs to the class IV-like SAM-binding methyltransferase superfamily. TRM10 family. In terms of assembly, interacts with tRNA.

The protein resides in the nucleus. Its subcellular location is the nucleolus. It catalyses the reaction guanosine(9) in tRNA + S-adenosyl-L-methionine = N(1)-methylguanosine(9) in tRNA + S-adenosyl-L-homocysteine + H(+). Functionally, S-adenosyl-L-methionine-dependent guanine N(1)-methyltransferase that catalyzes the formation of N(1)-methylguanine at position 9 (m1G9) in tRNAs. Probably not able to catalyze formation of N(1)-methyladenine at position 9 (m1A9) in tRNAs. The polypeptide is tRNA methyltransferase 10 homolog A (Trmt10a) (Mus musculus (Mouse)).